A 712-amino-acid chain; its full sequence is Testis-specific gene 10 protein (712 aa).

Ser161 is subject to Phosphoserine. The segment at 571 to 703 (QMTNERISMQ…SPDRDLDRSL (133 aa)) is interaction with HIF1A. Residues 673–699 (YHLGSMKPNTKCHSPERAHHRSPDRDL) are disordered. Residues 685–699 (HSPERAHHRSPDRDL) are compositionally biased toward basic and acidic residues. The residue at position 702 (Ser702) is a Phosphoserine.

It belongs to the CEP135/TSGA10 family. In terms of assembly, interacts with HIF1A. Processed into N-terminal 27-kDa and C-terminal 55-kDa fragments. Expressed in testis, predominantly in elongated spermatids (at protein level). Detected in spermatocytes only at the mRNA, but not at the protein level.

The protein localises to the cytoplasm. The protein resides in the cytoskeleton. Its subcellular location is the microtubule organizing center. It localises to the centrosome. It is found in the centriole. Its function is as follows. Plays a role in spermatogenesis. When overexpressed, prevents nuclear localization of HIF1A. The sequence is that of Testis-specific gene 10 protein (Tsga10) from Rattus norvegicus (Rat).